A 514-amino-acid chain; its full sequence is Ankyrin repeat domain-containing protein 34B (514 aa).

ANK repeat units lie at residues 9–38 (SEGN…YINE), 42–79 (RGET…DPNI), 83–113 (SGKT…DLSL), and 117–146 (SSYS…AKGK). Residues 220–249 (NDDTWDPGSPVRKPALAPKGPKLPHAPPWV) are disordered. Serine 263 carries the post-translational modification Phosphoserine. Threonine 272 carries the post-translational modification Phosphothreonine. Serine 296 bears the Phosphoserine mark.

This sequence belongs to the ANKRD34 family. Post-translationally, phosphorylated.

The protein resides in the cytoplasm. Its subcellular location is the nucleus. The protein is Ankyrin repeat domain-containing protein 34B (ANKRD34B) of Homo sapiens (Human).